Reading from the N-terminus, the 5207-residue chain is E3 ubiquitin-protein ligase RNF213 (5207 aa).

Disordered regions lie at residues 1-20 (MECPSCQHVSKEETPKFCSQ) and 27-365 (PAAP…EADV). Polar residues predominate over residues 34-43 (SENNNSTMAS). Positions 89–100 (KKKKRKKKKKGN) are enriched in basic residues. Low complexity-rich tracts occupy residues 101-117 (KSASSELASLPLSPASP) and 136-157 (SQAQQSGPTGQPSQPPGTATTP). The span at 188–197 (SEAQSSPQFQ) shows a compositional bias: polar residues. Residues S208 and S217 each carry the phosphoserine modification. Over residues 248–266 (GGSSEPGTELQTTEQQAGA) the composition is skewed to polar residues. Composition is skewed to basic and acidic residues over residues 285–294 (AGKEMKEKTQ), 309–346 (HCQEAETKTKDEMAAAEEKVGKNEQGEPEDLKKPEGKN), and 353–362 (KNEKEQKNQE). Residues 343–374 (EGKNRSAAAVKNEKEQKNQEADVQEVKASTLS) adopt a coiled-coil conformation. A Glycyl lysine isopeptide (Lys-Gly) (interchain with G-Cter in SUMO2) cross-link involves residue K1151. Residue S1258 is modified to Phosphoserine. ATP-binding positions include 1995–2000 (GVGKSL), E2098, D2155, and R2216. A Phosphoserine modification is found at S2273. Residues K2499 and S2574 each coordinate ATP. Zn(2+)-binding residues include C3997, C4000, C4012, H4014, C4017, C4020, C4032, C4035, C4505, and H4509. The segment at 3997–4036 (CSICLGDAKDPVCLPCDHVHCLRCLRAWFASEQMICPYCL) adopts an RING-type zinc-finger fold. The RZ-type zinc finger occupies 4483-4555 (MPEDLLAQAR…VKDKADRTQT (73 aa)). Catalysis depends on C4516, which acts as the Nucleophile; for E3 ubiquitin-lipopolysaccharide ligase activity. Residues C4525 and C4528 each coordinate Zn(2+).

The protein belongs to the AAA ATPase family. In terms of assembly, monomer. Interacts with UBE2L3/UBCH7; UBE2L3/UBCH7 is the most efficient ubiquitin-conjugating enzyme E2 for the ubiquitin ligase activity. Interacts with UBE2N/UBC13; promoting 'Lys-63'-linked ubiquitination of target proteins. As to quaternary structure, (Microbial infection) Interacts with M.tuberculosis protein Rv3655c, which impairs caspase-8 activation and suppresses macrophage apoptosis by blocking the extrinsic pathway. In terms of processing, autoubiquitinated. In terms of tissue distribution, widely expressed (at protein level). As to expression, major isoform detected in all tissues examined. Minor isoform with restricted expression.

The protein resides in the cytoplasm. The protein localises to the cytosol. It is found in the lipid droplet. It catalyses the reaction S-ubiquitinyl-[E2 ubiquitin-conjugating enzyme]-L-cysteine + [acceptor protein]-L-lysine = [E2 ubiquitin-conjugating enzyme]-L-cysteine + N(6)-ubiquitinyl-[acceptor protein]-L-lysine.. The catalysed reaction is ATP + H2O = ADP + phosphate + H(+). It functions in the pathway protein modification; protein ubiquitination. Its function is as follows. Atypical E3 ubiquitin ligase that can catalyze ubiquitination of both proteins and lipids, and which is involved in various processes, such as lipid metabolism, angiogenesis and cell-autonomous immunity. Acts as a key immune sensor by catalyzing ubiquitination of the lipid A moiety of bacterial lipopolysaccharide (LPS) via its RZ-type zinc-finger: restricts the proliferation of cytosolic bacteria, such as Salmonella, by generating the bacterial ubiquitin coat through the ubiquitination of LPS. Also acts indirectly by mediating the recruitment of the LUBAC complex, which conjugates linear polyubiquitin chains. Ubiquitination of LPS triggers cell-autonomous immunity, such as antibacterial autophagy, leading to degradation of the microbial invader. Involved in lipid metabolism by regulating fat storage and lipid droplet formation; act by inhibiting the lipolytic process. Also regulates lipotoxicity by inhibiting desaturation of fatty acids. Also acts as an E3 ubiquitin-protein ligase via its RING-type zinc finger: mediates 'Lys-63'-linked ubiquitination of target proteins. Involved in the non-canonical Wnt signaling pathway in vascular development: acts by mediating ubiquitination and degradation of FLNA and NFATC2 downstream of RSPO3, leading to inhibit the non-canonical Wnt signaling pathway and promoting vessel regression. Also has ATPase activity; ATPase activity is required for ubiquitination of LPS. The chain is E3 ubiquitin-protein ligase RNF213 from Homo sapiens (Human).